Here is a 722-residue protein sequence, read N- to C-terminus: Tegument protein UL46 (722 aa).

The disordered stretch occupies residues 423 to 534 (RLAASGPPGG…AAAARPLAAQ (112 aa)). 2 stretches are compositionally biased toward basic and acidic residues: residues 440–451 (CRDKIQRTRRDN) and 474–491 (HRED…DRGP). Residues 510–522 (PRLPPRNPAPPEQ) are compositionally biased toward pro residues. Residues 523–534 (RPAAAARPLAAQ) are compositionally biased toward low complexity.

This sequence belongs to the herpesviridae HHV-1 VP11/12 protein family. In terms of assembly, interacts with VP16. Interacts with host LCK, PIK3R1, SHC1 AND GRB2; these interactions promote the activation of the PI3K/AKT pathway. Interacts with host YWHAB. Interacts with ICP0; this interaction targets UL46 for degradation by the proteasome. Post-translationally, phosphorylated by host LCK. The phosphorylation seems to be lymphocyte-specific.

It is found in the virion tegument. Its subcellular location is the host cell membrane. Functionally, plays a role in the activation of the host PI3K/AKT pathway to promote cell survival. Interacts with and activates host LCK and thereby recruits downstream partners SHC1, GRB2 and PI3KR1 in order to activate the PI3K pathway by phosphorylating host AKT on its activating residues. This mechanism is inhibited by the viral protein US3 that instead promotes incorporation of UL46 into virions. This is Tegument protein UL46 from Homo sapiens (Human).